The primary structure comprises 509 residues: BPI fold-containing family C protein (509 aa).

The N-terminal stretch at 1–23 (MRTKQVPVLWACFLLWSLYIASS) is a signal peptide. Asparagine 63, asparagine 79, asparagine 92, asparagine 113, and asparagine 117 each carry an N-linked (GlcNAc...) asparagine glycan. An intrachain disulfide couples cysteine 161 to cysteine 202. 5 N-linked (GlcNAc...) asparagine glycosylation sites follow: asparagine 215, asparagine 227, asparagine 357, asparagine 374, and asparagine 457.

Belongs to the BPI/LBP/Plunc superfamily. BPI/LBP family.

It is found in the secreted. This chain is BPI fold-containing family C protein (Bpifc), found in Mus musculus (Mouse).